The following is a 292-amino-acid chain: 4-hydroxy-tetrahydrodipicolinate synthase (292 aa).

Thr-45 is a pyruvate binding site. Tyr-133 (proton donor/acceptor) is an active-site residue. Catalysis depends on Lys-161, which acts as the Schiff-base intermediate with substrate. Pyruvate is bound at residue Ile-203.

It belongs to the DapA family. As to quaternary structure, homotetramer; dimer of dimers.

It localises to the cytoplasm. The catalysed reaction is L-aspartate 4-semialdehyde + pyruvate = (2S,4S)-4-hydroxy-2,3,4,5-tetrahydrodipicolinate + H2O + H(+). Its pathway is amino-acid biosynthesis; L-lysine biosynthesis via DAP pathway; (S)-tetrahydrodipicolinate from L-aspartate: step 3/4. Its function is as follows. Catalyzes the condensation of (S)-aspartate-beta-semialdehyde [(S)-ASA] and pyruvate to 4-hydroxy-tetrahydrodipicolinate (HTPA). The protein is 4-hydroxy-tetrahydrodipicolinate synthase of Escherichia fergusonii (strain ATCC 35469 / DSM 13698 / CCUG 18766 / IAM 14443 / JCM 21226 / LMG 7866 / NBRC 102419 / NCTC 12128 / CDC 0568-73).